A 215-amino-acid polypeptide reads, in one-letter code: CASP-like protein UU3 (215 aa).

At Met-1–Gly-44 the chain is on the cytoplasmic side. The helical transmembrane segment at Ile-45–Val-65 threads the bilayer. The Extracellular portion of the chain corresponds to Leu-66–Ala-93. Residues Phe-94–Val-114 traverse the membrane as a helical segment. The Cytoplasmic portion of the chain corresponds to Glu-115 to Thr-128. Residues Leu-129–Ala-149 traverse the membrane as a helical segment. The Extracellular portion of the chain corresponds to Ser-150 to Lys-185. N-linked (GlcNAc...) asparagine glycosylation occurs at Asn-164. Residues Ala-186–Val-206 form a helical membrane-spanning segment. The Cytoplasmic segment spans residues Ser-207–Pro-215.

The protein belongs to the Casparian strip membrane proteins (CASP) family. As to quaternary structure, homodimer and heterodimers.

The protein localises to the cell membrane. This chain is CASP-like protein UU3, found in Physcomitrium patens (Spreading-leaved earth moss).